We begin with the raw amino-acid sequence, 418 residues long: MLPMNRNTLGLAVTIATVFVSSTVTAEVDFHGYVRAGIGISGENGQQVRYQSNKVGRLGNEDDLYSEILLGKELYSQDGKSFYVDSMMALLSDGSNDFEGTNTSCELLKNSAGDVDDVSCDNDAEFAIRQFNVQAKGLIPSNPDAVSWAGKRYYQRHDIHISDFYYWDTSGSGAGVENLSVGTGKLSLAVLRQDSGDINVNNFDIRYAEIALWQDANLELGFNYGLINETDAQKAEVGEDPLMLTAEITMANVIGGLNKTIFQYATESYGEQMAGLGAGNSPDATSDDGIDGYRIINWGVIAPTKTWEIGHQIVYANSSFDSQDDHSIFNVVVRPMYKWDENMRTVFEGGWFTEEDNKVDSSGSKFTVAQAWSAGSSFWARPELRVYASYLKDYENDNAFGIGNDTEYNLGVQVEAWW.

The signal sequence occupies residues 1 to 26 (MLPMNRNTLGLAVTIATVFVSSTVTA).

It belongs to the porin LamB (TC 1.B.3) family. In terms of assembly, homotrimer formed of three 18-stranded antiparallel beta-barrels, containing three independent channels.

The protein localises to the cell outer membrane. It carries out the reaction beta-maltose(in) = beta-maltose(out). Its function is as follows. Involved in the transport of maltose and maltodextrins. The chain is Maltoporin from Photobacterium profundum (strain SS9).